Reading from the N-terminus, the 364-residue chain is Protein spindle-F (364 aa).

Residues Met-1–Ser-26 form a disordered region. Residues Thr-9–Ser-26 show a composition bias toward low complexity. Positions Ala-32 to Leu-114 form a coiled coil. Residue Ser-53 is modified to Phosphoserine. Positions Glu-56–Asn-75 are disordered. A phosphoserine mark is found at Ser-85, Ser-172, and Ser-202. The stretch at Ala-210–Ala-243 forms a coiled coil. Residues Ser-264 and Ser-270 each carry the phosphoserine modification. The UBZ1-type zinc-finger motif lies at Glu-310–His-336. Zn(2+) is bound by residues Cys-313 and Cys-316. Residue Ser-325 is modified to Phosphoserine. Zn(2+)-binding residues include His-332 and His-336. Ser-349 is subject to Phosphoserine.

In terms of assembly, forms homooligomers. Interacts with the dynein light chain ctp. Interacts (via C-terminus) with IKKepsilon; this leads to phosphorylation of spn-F. Forms ternary complexes with ctp and IKKepsilon; this is required for spn-F redistribution from puncta in larval neurons and for dendrite pruning. Interacts with ctp and IKKepsilon through distinct regions. Interacts (via C-terminus) with jvl. Post-translationally, phosphorylated by IKKepsilon. Phosphorylation is required for spn-F neuronal distribution and dendrite pruning and reduces spn-F homooligomerization. It does not lead to spn-F degradation. As to expression, in pupal bristles, localizes to the bristle tip throughout the elongation period (at protein level).

The protein resides in the cytoplasm. It localises to the cytoskeleton. Its subcellular location is the cell projection. It is found in the axon. The protein localises to the dendrite. The protein resides in the perikaryon. Its function is as follows. Plays a role in oocyte axis determination and microtubule organization during oogenesis. Also required for polarized organization of the bristle. Required, with jvl, for activation of the kinase IKKepsilon in the germ line. Also required for localization of IKKepsilon to the distal tip of elongating bristles by acting as an adapter linking IKKepsilon and cytoplasmic dynein. Involved in dendrite pruning in larval sensory neurons during metamorphosis. The sequence is that of Protein spindle-F from Drosophila melanogaster (Fruit fly).